Here is a 215-residue protein sequence, read N- to C-terminus: 3-demethoxyubiquinol 3-hydroxylase (215 aa).

Positions 64, 94, 97, 146, 178, and 181 each coordinate Fe cation.

The protein belongs to the COQ7 family. It depends on Fe cation as a cofactor.

It is found in the cell membrane. It catalyses the reaction a 5-methoxy-2-methyl-3-(all-trans-polyprenyl)benzene-1,4-diol + AH2 + O2 = a 3-demethylubiquinol + A + H2O. It participates in cofactor biosynthesis; ubiquinone biosynthesis. In terms of biological role, catalyzes the hydroxylation of 2-nonaprenyl-3-methyl-6-methoxy-1,4-benzoquinol during ubiquinone biosynthesis. This chain is 3-demethoxyubiquinol 3-hydroxylase, found in Azotobacter vinelandii (strain DJ / ATCC BAA-1303).